Here is a 412-residue protein sequence, read N- to C-terminus: Sulfhydrogenase 2 subunit alpha (412 aa).

The Ni(2+) site is built by Cys-60, Cys-63, Cys-402, and Cys-405. Cys-63 is a Fe cation binding site. Cys-405 is a Fe cation binding site.

This sequence belongs to the [NiFe]/[NiFeSe] hydrogenase large subunit family. As to quaternary structure, dimer of heterotetramer of alpha, beta, gamma and delta subunits. The nickel-containing alpha and delta subunits constitute the hydrogenase activity. The beta and gamma subunits (flavin-containing dimer) constitute the sulfur reductase activity. The cofactor is Ni(2+). It depends on Fe cation as a cofactor.

Its subcellular location is the cytoplasm. It catalyses the reaction H2 + NADP(+) = NADPH + H(+). The enzyme catalyses H2 + NAD(+) = NADH + H(+). Its function is as follows. Part of a bifunctional enzyme complex that functions as a hydrogen-evolving hydrogenase with sulfur-reducing activity. May play a role in hydrogen cycling during fermentative growth. Activity exhibited with NAD in addition to NADPH. The alpha and delta subunits form the hydrogenase component that catalyzes the reduction of protons to evolve hydrogen. The chain is Sulfhydrogenase 2 subunit alpha from Pyrococcus furiosus (strain ATCC 43587 / DSM 3638 / JCM 8422 / Vc1).